The sequence spans 344 residues: tRNA N6-adenosine threonylcarbamoyltransferase (344 aa).

Fe cation is bound by residues H113 and H117. Substrate is bound by residues L135–G139, D169, G182, D186, and N278. Residue D306 coordinates Fe cation.

Belongs to the KAE1 / TsaD family. It depends on Fe(2+) as a cofactor.

Its subcellular location is the cytoplasm. The catalysed reaction is L-threonylcarbamoyladenylate + adenosine(37) in tRNA = N(6)-L-threonylcarbamoyladenosine(37) in tRNA + AMP + H(+). Functionally, required for the formation of a threonylcarbamoyl group on adenosine at position 37 (t(6)A37) in tRNAs that read codons beginning with adenine. Is involved in the transfer of the threonylcarbamoyl moiety of threonylcarbamoyl-AMP (TC-AMP) to the N6 group of A37, together with TsaE and TsaB. TsaD likely plays a direct catalytic role in this reaction. This chain is tRNA N6-adenosine threonylcarbamoyltransferase, found in Corynebacterium efficiens (strain DSM 44549 / YS-314 / AJ 12310 / JCM 11189 / NBRC 100395).